Reading from the N-terminus, the 311-residue chain is Pyrimidine-specific ribonucleoside hydrolase RihA (311 aa).

Residue histidine 240 is part of the active site.

This sequence belongs to the IUNH family. RihA subfamily.

Functionally, hydrolyzes with equal efficiency cytidine or uridine to ribose and cytosine or uracil, respectively. This chain is Pyrimidine-specific ribonucleoside hydrolase RihA, found in Escherichia coli (strain SMS-3-5 / SECEC).